The chain runs to 86 residues: U15-lycotoxin-Ls1c (86 aa).

Positions 1–20 (MNSKIFAVLLLLAFLSCVLS) are cleaved as a signal peptide. Residues 21-66 (DQYCPKSSITACKKMNIRNDCCKDDDCTGGSWCCATPCGNICKYPT) enclose the WAP domain. Intrachain disulfides connect C24–C54, C32–C58, C41–C53, C42–C80, and C47–C62.

Belongs to the venom protein 11 family. 01 (wap-1) subfamily. Post-translationally, contains 5 disulfide bonds. Expressed by the venom gland.

It is found in the secreted. Functionally, has antibacterial activity. This is U15-lycotoxin-Ls1c from Lycosa singoriensis (Wolf spider).